The primary structure comprises 370 residues: 2-aminoethylphosphonate--pyruvate transaminase 2 (370 aa).

K194 is modified (N6-(pyridoxal phosphate)lysine).

The protein belongs to the class-V pyridoxal-phosphate-dependent aminotransferase family. PhnW subfamily. Homodimer. It depends on pyridoxal 5'-phosphate as a cofactor.

The catalysed reaction is (2-aminoethyl)phosphonate + pyruvate = phosphonoacetaldehyde + L-alanine. Its function is as follows. Involved in phosphonate degradation. The protein is 2-aminoethylphosphonate--pyruvate transaminase 2 of Paraburkholderia xenovorans (strain LB400).